Consider the following 370-residue polypeptide: Putative agmatine deiminase (370 aa).

Catalysis depends on cysteine 361, which acts as the Amidino-cysteine intermediate.

Belongs to the agmatine deiminase family.

It carries out the reaction agmatine + H2O = N-carbamoylputrescine + NH4(+). This Shewanella baltica (strain OS185) protein is Putative agmatine deiminase.